The following is an 892-amino-acid chain: Alanine--tRNA ligase (892 aa).

Positions 593, 597, 694, and 698 each coordinate Zn(2+).

Belongs to the class-II aminoacyl-tRNA synthetase family. Zn(2+) is required as a cofactor.

The protein localises to the cytoplasm. The enzyme catalyses tRNA(Ala) + L-alanine + ATP = L-alanyl-tRNA(Ala) + AMP + diphosphate. In terms of biological role, catalyzes the attachment of alanine to tRNA(Ala) in a two-step reaction: alanine is first activated by ATP to form Ala-AMP and then transferred to the acceptor end of tRNA(Ala). Also edits incorrectly charged Ser-tRNA(Ala) and Gly-tRNA(Ala) via its editing domain. The chain is Alanine--tRNA ligase from Helicobacter hepaticus (strain ATCC 51449 / 3B1).